The following is a 344-amino-acid chain: Adenosine kinase 1 (344 aa).

D299 is an active-site residue.

The protein belongs to the carbohydrate kinase PfkB family. As to quaternary structure, interacts with the begomovirus AL2 protein and the curtovirus L2 protein. The cofactor is Mg(2+). In terms of tissue distribution, widely expressed.

It catalyses the reaction adenosine + ATP = AMP + ADP + H(+). It participates in purine metabolism; AMP biosynthesis via salvage pathway; AMP from adenosine: step 1/1. With respect to regulation, inactivated by the begomovirus AL2 protein or the curtovirus L2 protein. Its function is as follows. ATP dependent phosphorylation of adenosine and other related nucleoside analogs to monophosphate derivatives. Essential to sustain methyl recycling. This Arabidopsis thaliana (Mouse-ear cress) protein is Adenosine kinase 1.